Here is a 374-residue protein sequence, read N- to C-terminus: Trehalose-phosphate phosphatase B (374 aa).

This sequence belongs to the trehalose phosphatase family. It depends on a divalent metal cation as a cofactor. In terms of tissue distribution, expressed in flowers.

It catalyses the reaction alpha,alpha-trehalose 6-phosphate + H2O = alpha,alpha-trehalose + phosphate. It functions in the pathway glycan biosynthesis; trehalose biosynthesis. Removes the phosphate from trehalose 6-phosphate to produce free trehalose. Trehalose accumulation in plant may improve abiotic stress tolerance. This chain is Trehalose-phosphate phosphatase B (TPPB), found in Arabidopsis thaliana (Mouse-ear cress).